Consider the following 368-residue polypeptide: G-protein coupled receptor 183-A (368 aa).

Over 1–27 (METTSANFTQNDSNVCTNLYNHRGWAQ) the chain is Extracellular. Asparagine 7 and asparagine 11 each carry an N-linked (GlcNAc...) asparagine glycan. The helical transmembrane segment at 28–53 (YFLPAMYSLICIVGLLGNVLALHVIW) threads the bilayer. At 54-73 (PNLKKINSTTLYSANLVVSD) the chain is on the cytoplasmic side. A helical membrane pass occupies residues 74–91 (ILFSLALPLRVVYYARGF). Topologically, residues 92 to 101 (DWPMGEGLCK) are extracellular. An intrachain disulfide couples cysteine 100 to cysteine 178. Residues 102–123 (AVALLFYINMYAGVNFMTCLSV) form a helical membrane-spanning segment. Residues 124–145 (DRFIAVVLPLRFSRFRKVQKVR) are Cytoplasmic-facing. The helical transmembrane segment at 146–164 (YICGVVWVVVLMQTLPLLS) threads the bilayer. The Extracellular portion of the chain corresponds to 165–189 (MPMTNIEQSGHITCMEYPNFEKIDN). Residues 190–212 (LPVMLIGAVVLGFGIPVITILVC) form a helical membrane-spanning segment. Residues 213–238 (YTALCLKLRHLAKSNKLTEKSGRSSK) lie on the Cytoplasmic side of the membrane. The helical transmembrane segment at 239–262 (AIGVICTVILVFVVCYSPYHVDLL) threads the bilayer. Residues 263–282 (QYMIKKLRYDPDCSELHKFQ) lie on the Extracellular side of the membrane. A helical transmembrane segment spans residues 283-307 (ISLHITVCFMNLNSCLDPFIYFFAC). The Cytoplasmic segment spans residues 308–368 (KGYKKKVLKL…SSVLLNSLEQ (61 aa)).

The protein belongs to the G-protein coupled receptor 1 family.

The protein localises to the cell membrane. In terms of biological role, G-protein coupled receptor expressed in lymphocytes that acts as a chemotactic receptor for B-cells, T-cells, splenic dendritic cells, monocytes/macrophages and astrocytes. Receptor for oxysterol 7-alpha,25-dihydroxycholesterol (7-alpha,25-OHC) and other related oxysterols. Mediates cell positioning and movement of a number of cells by binding the 7-alpha,25-OHC ligand that forms a chemotactic gradient. Binding of 7-alpha,25-OHC mediates the correct localization of B-cells during humoral immune responses. The sequence is that of G-protein coupled receptor 183-A (gpr183a) from Danio rerio (Zebrafish).